The chain runs to 150 residues: Large ribosomal subunit protein uL15 (150 aa).

The segment at Met-1–His-58 is disordered.

It belongs to the universal ribosomal protein uL15 family. In terms of assembly, part of the 50S ribosomal subunit.

Binds to the 23S rRNA. This is Large ribosomal subunit protein uL15 from Solibacter usitatus (strain Ellin6076).